Consider the following 49-residue polypeptide: MLFDTHAHLNAVQYEEDLEQVIERARAEGVSHIVVVGFDRPTIDRAIEL.

This sequence belongs to the metallo-dependent hydrolases superfamily. TatD-type hydrolase family. Requires a divalent metal cation as cofactor.

This is an uncharacterized protein from Geobacillus stearothermophilus (Bacillus stearothermophilus).